A 254-amino-acid chain; its full sequence is MWIGVISLFPEMFRAITDYGVTGRAVKKGLLSVQCWNPRDFTHDRHRTVDDRPYGGGPGMLMMVQPLRDAIHAAKAAAGEGAKVIYLSPQGRKLDQQGVCELSVSQKLILVCGRYEGIDERVIQTEIDEEWSIGDYVLSGGELPAMTLIDSISRFVPGVLGDQASAEEDSFVDGLLDCPHYTRPEVLQDMEVPPVLLSGNHAEIRRWRLKQSLGRTWLRRPELLESLALTDEQAKLLTQFRKEHAAQQDHEGCD.

Residues G113 and 133 to 138 (IGDYVL) contribute to the S-adenosyl-L-methionine site.

It belongs to the RNA methyltransferase TrmD family. In terms of assembly, homodimer.

Its subcellular location is the cytoplasm. It carries out the reaction guanosine(37) in tRNA + S-adenosyl-L-methionine = N(1)-methylguanosine(37) in tRNA + S-adenosyl-L-homocysteine + H(+). Specifically methylates guanosine-37 in various tRNAs. This Edwardsiella ictaluri (strain 93-146) protein is tRNA (guanine-N(1)-)-methyltransferase.